The sequence spans 283 residues: Phosphatidylglycerol--prolipoprotein diacylglyceryl transferase (283 aa).

3 consecutive transmembrane segments (helical) span residues 17-37 (LAVR…TFLG), 56-76 (FLTW…VLFY), and 92-112 (WEGG…IWLF). Position 139 (Arg139) interacts with a 1,2-diacyl-sn-glycero-3-phospho-(1'-sn-glycerol). 2 helical membrane-spanning segments follow: residues 222 to 242 (GQTA…AEFA) and 255 to 275 (GLSM…VGFV).

The protein belongs to the Lgt family.

The protein localises to the cell inner membrane. It carries out the reaction L-cysteinyl-[prolipoprotein] + a 1,2-diacyl-sn-glycero-3-phospho-(1'-sn-glycerol) = an S-1,2-diacyl-sn-glyceryl-L-cysteinyl-[prolipoprotein] + sn-glycerol 1-phosphate + H(+). It participates in protein modification; lipoprotein biosynthesis (diacylglyceryl transfer). In terms of biological role, catalyzes the transfer of the diacylglyceryl group from phosphatidylglycerol to the sulfhydryl group of the N-terminal cysteine of a prolipoprotein, the first step in the formation of mature lipoproteins. The sequence is that of Phosphatidylglycerol--prolipoprotein diacylglyceryl transferase from Neisseria gonorrhoeae (strain ATCC 700825 / FA 1090).